We begin with the raw amino-acid sequence, 383 residues long: 3-phytase (383 aa).

The first 26 residues, 1–26 (MNHSKTLLLTAAAGLMLTCGAVSSQA), serve as a signal peptide directing secretion. Residues 27–30 (KHKL) constitute a propeptide that is removed on maturation. Positions 31-362 (SDPYHFTVNA…VPWERIADKI (332 aa)) constitute a BPP domain. The segment at 364-383 (FHPQVNKQVDPRKMTDRSGK) is disordered. Positions 372–383 (VDPRKMTDRSGK) are enriched in basic and acidic residues.

Its subcellular location is the secreted. The catalysed reaction is 1D-myo-inositol hexakisphosphate + H2O = 1D-myo-inositol 1,2,4,5,6-pentakisphosphate + phosphate. This Bacillus sp. (strain DS11) protein is 3-phytase (phy).